Here is a 437-residue protein sequence, read N- to C-terminus: Minor fimbrial subunit HifE (437 aa).

The first 30 residues, methionine 1–alanine 30, serve as a signal peptide directing secretion.

This sequence belongs to the fimbrial protein family.

It is found in the fimbrium. In terms of biological role, may be a minor structural protein required for pilus biogenesis. May be the adhesive component in the pili. This is Minor fimbrial subunit HifE (hifE) from Haemophilus influenzae.